The primary structure comprises 551 residues: Arginine--tRNA ligase (551 aa).

Positions 125–135 (ANPTGPLHIGH) match the 'HIGH' region motif.

The protein belongs to the class-I aminoacyl-tRNA synthetase family. As to quaternary structure, monomer.

Its subcellular location is the cytoplasm. The enzyme catalyses tRNA(Arg) + L-arginine + ATP = L-arginyl-tRNA(Arg) + AMP + diphosphate. This Nitratidesulfovibrio vulgaris (strain ATCC 29579 / DSM 644 / CCUG 34227 / NCIMB 8303 / VKM B-1760 / Hildenborough) (Desulfovibrio vulgaris) protein is Arginine--tRNA ligase.